The primary structure comprises 689 residues: Glycine--tRNA ligase beta subunit (689 aa).

The protein belongs to the class-II aminoacyl-tRNA synthetase family. Tetramer of two alpha and two beta subunits.

The protein localises to the cytoplasm. It catalyses the reaction tRNA(Gly) + glycine + ATP = glycyl-tRNA(Gly) + AMP + diphosphate. This Shigella boydii serotype 4 (strain Sb227) protein is Glycine--tRNA ligase beta subunit.